The chain runs to 205 residues: Small ribosomal subunit protein uS4c (205 aa).

Residues T22–L42 are disordered. Residues K28–L42 show a composition bias toward polar residues. Residues M94–V157 enclose the S4 RNA-binding domain.

This sequence belongs to the universal ribosomal protein uS4 family. Part of the 30S ribosomal subunit. Contacts protein S5. The interaction surface between S4 and S5 is involved in control of translational fidelity.

The protein resides in the plastid. The protein localises to the chloroplast. In terms of biological role, one of the primary rRNA binding proteins, it binds directly to 16S rRNA where it nucleates assembly of the body of the 30S subunit. Functionally, with S5 and S12 plays an important role in translational accuracy. The sequence is that of Small ribosomal subunit protein uS4c (rps4) from Tupiella akineta (Green alga).